The following is a 1285-amino-acid chain: MARSDGFSPRKSLRRSAREHSRSYVGQGSNDDFDDMYSPPSRRRGSGGGDGNGYTRSGRKIHHSRYYEEDYQDAISSDDERMYRPRRNSNSLTYRQQCKQAIDESKRIQKVPPAKRKRIYMSDDEEEFVETRQMENTAPDRPTRRSSRRMSSTHEEPDVLDQEDVSPIRRTRRTTIRFGSEPVEENMEVPRVLETNDMANEAIVQAVDNTENGETEEDVIEKIGREEEEEGDEEEAESGEKEQVGLLFHRIFNQAYLQEDEESSNAESSEESTAPRQYSLRRRQPVVQFNQSEARENRRARLEHHRAANANRHHRNRNTSNRRRRSGSDSDSDDMVLPRPDKRQSRPHMHNRGERERGRFMPINMTEKELQSAQHILMDRMRKTDAGQGASDIDPMSVDSSVGFDQVGGLSHHIQSLKEVVLFPMLYPEVFAKFKINPPKGVVFYGPPGTGKTLVARALANECRRGANKVAFFMRKGADCLSKWVGESERQLRLLFDQAYAMRPSIIFFDEIDGLAPVRSSKQDQIHASIVSTLLALMDGLDGRGEVVVIGATNRLDSLDPALRRPGRFDRELRFSLPDLNARRHILDIHTSKWEENKPTPETLDGIAEKTSGYCGADLKFLCTESVLIGLRSRYPHIYMCSERLKLDITTIKITEEHFGHAMRRITPASRRDLTIPSRPLDERTSILLGDIVKNLISLRIPQGYRCVENAMATASTELEQVVRALEPNLTVPAIRLLLCGSPSLSDGGQTSYVLPAILAKLDHLPVFSLSVSSLLTDGRPEEAFSNAVQSAMRASATGPCIMLLPSIDEWIKVIPVSVQHMLITCLESMTGFTPILFLSTLDSSFEDAPEYATEVFRHANCISLNPSRRSVRKRYFEFVIDGVRRKPKVFDPTIYEMPQADDDSPEAKPSRKLNDDETRELLKMYTALQRQMRMFFKERLSRLIRDRRFVEFVEPVDPEEAEDYYEIIETPICMQDIMEKLNKCEYNHADKFIADLVLIQSNALEYNPSNTKDGKLIRQMANTFRDAIDDMIDCELDESFVERIEMVSRMLQDAGVTPTSDQLLTEIPKGFSRKKPWTMANTLAKEIEQWKAEREAENEKLKEKLGISTDTAQSAIEENKSEEGTSSSVEEIKKKLNKKKKDQKRNKKASSQDPDGDDTEETEEAVAENNVDADVEMKETPADPVPTIQSSSSQEREIIVSADSITDLIKLCVEKSEGWSVSELERLSSVLSHTIERFRDEWNRENLPEQLAQIVREWEATDATNEKIANGKASNKNGIVFNGY.

Disordered stretches follow at residues 1-95, 121-173, 224-243, and 258-359; these read MARS…LTYR, MSDD…RTRR, GREEEEEGDEEEAESGEKEQ, and QEDE…ERGR. Acidic residues-rich tracts occupy residues 226 to 237 and 258 to 270; these read EEEEEGDEEEAE and QEDEESSNAESSE. Residues 311 to 325 show a composition bias toward basic residues; sequence NRHHRNRNTSNRRRR. An ATP-binding site is contributed by 446 to 453; sequence GPPGTGKT. The Bromo domain maps to 928–1032; the sequence is ALQRQMRMFF…NTFRDAIDDM (105 aa). Residues 1100–1196 are disordered; that stretch reads EKLKEKLGIS…PTIQSSSSQE (97 aa). Positions 1136–1149 are enriched in basic residues; sequence KLNKKKKDQKRNKK. Positions 1155-1175 are enriched in acidic residues; that stretch reads PDGDDTEETEEAVAENNVDAD.

This sequence belongs to the AAA ATPase family.

In terms of biological role, thought to form a complex that enhances transcription from repetitive DNA sequences by modulating chromatin structure. The chain is Tat-binding homolog 7 from Caenorhabditis briggsae.